Reading from the N-terminus, the 672-residue chain is DNA ligase (672 aa).

NAD(+) contacts are provided by residues 35-39 (DAQYD), 84-85 (SL), and E115. K117 serves as the catalytic N6-AMP-lysine intermediate. 4 residues coordinate NAD(+): R138, E178, K294, and K318. The Zn(2+) site is built by C412, C415, C430, and C435. In terms of domain architecture, BRCT spans 592–672 (ATGGPFVGKS…AFLQMLQTNA (81 aa)).

Belongs to the NAD-dependent DNA ligase family. LigA subfamily. Requires Mg(2+) as cofactor. The cofactor is Mn(2+).

It carries out the reaction NAD(+) + (deoxyribonucleotide)n-3'-hydroxyl + 5'-phospho-(deoxyribonucleotide)m = (deoxyribonucleotide)n+m + AMP + beta-nicotinamide D-nucleotide.. Functionally, DNA ligase that catalyzes the formation of phosphodiester linkages between 5'-phosphoryl and 3'-hydroxyl groups in double-stranded DNA using NAD as a coenzyme and as the energy source for the reaction. It is essential for DNA replication and repair of damaged DNA. The chain is DNA ligase from Myxococcus xanthus (strain DK1622).